The chain runs to 509 residues: Maturase K (509 aa).

It belongs to the intron maturase 2 family. MatK subfamily.

It localises to the plastid. The protein localises to the chloroplast. Usually encoded in the trnK tRNA gene intron. Probably assists in splicing its own and other chloroplast group II introns. This chain is Maturase K, found in Anthocercis viscosa (Sticky tailflower).